A 1320-amino-acid chain; its full sequence is Collagen alpha-1(XX) chain (1320 aa).

The N-terminal stretch at methionine 1–glycine 25 is a signal peptide. The 92-residue stretch at valine 27–glutamine 118 folds into the Fibronectin type-III 1 domain. Positions aspartate 177–leucine 352 constitute a VWFA domain. Fibronectin type-III domains are found at residues threonine 377–proline 466, proline 467–glycine 556, proline 557–alanine 644, serine 646–alanine 735, and proline 740–alanine 831. Residue asparagine 433 is glycosylated (N-linked (GlcNAc...) asparagine). 2 N-linked (GlcNAc...) asparagine glycosylation sites follow: asparagine 569 and asparagine 604. The disordered stretch occupies residues serine 728–asparagine 752. The span at proline 733–serine 748 shows a compositional bias: low complexity. N-linked (GlcNAc...) asparagine glycosylation is present at asparagine 771. The 196-residue stretch at glycine 840 to aspartate 1035 folds into the Laminin G-like domain. 2 disordered regions span residues tyrosine 1064–glutamate 1220 and leucine 1291–glutamate 1320. Residues proline 1069 to leucine 1080 are compositionally biased toward pro residues. Collagen-like domains are found at residues proline 1069–arginine 1122, glutamine 1125–glycine 1174, and glycine 1165–proline 1221. Residues proline 1081–proline 1093 show a composition bias toward low complexity. Residues glycine 1106–glycine 1115 are compositionally biased toward gly residues. Low complexity predominate over residues glutamine 1140–glutamine 1152. A compositionally biased stretch (polar residues) spans isoleucine 1302–glutamate 1320.

Its subcellular location is the secreted. The protein localises to the extracellular space. In terms of biological role, probable collagen protein. This is Collagen alpha-1(XX) chain (Col20a1) from Mus musculus (Mouse).